The primary structure comprises 450 residues: MRRHAIILAAGKGTRMKSKKYKVLHEVAGKPMVEHVLESVKGSGVDQVVTIVGHGAESVKGHLGERSLYSFQEEQLGTAHAVQMAKSHLEDKEGTTIVVCGDTPLITKETLETLIAHHEDANAQATVLSASIQQPYGYGRIVRNASGRLERIVEEKDATQAEKDINEISSGIFAFNNKTLFEKLTQVKNDNAQGEYYLPDVLSLILNDGGIVEVYRTNDVEEIMGVNDRVMLSQAENAMQRRTNHYHMLNGVTIIDPDSTYIGPDVTIGSDTVIEPGVRINGRTEIGEDVVIGQYSEINNSTIENGACIQQSVVNDASVGANTKVGPFAQLRPGAQLGADVKVGNFVEIKKADLKDGAKVSHLSYIGDAVIGERTNIGCGTITVNYDGENKFKTIVGKDSFVGCNVNLVAPVTIGDDVLVAAGSTITDDVPNDSLAVARARQTTKEGYRK.

The pyrophosphorylase stretch occupies residues 1-229 (MRRHAIILAA…VEEIMGVNDR (229 aa)). UDP-N-acetyl-alpha-D-glucosamine-binding positions include 8-11 (LAAG), Lys22, Gln72, and 77-78 (GT). Asp102 is a binding site for Mg(2+). UDP-N-acetyl-alpha-D-glucosamine contacts are provided by Gly139, Glu154, and Asn227. Asn227 contributes to the Mg(2+) binding site. The interval 230 to 250 (VMLSQAENAMQRRTNHYHMLN) is linker. The segment at 251 to 450 (GVTIIDPDST…RQTTKEGYRK (200 aa)) is N-acetyltransferase. Positions 332 and 350 each coordinate UDP-N-acetyl-alpha-D-glucosamine. The Proton acceptor role is filled by His362. The UDP-N-acetyl-alpha-D-glucosamine site is built by Tyr365 and Asn376. Residues 385–386 (NY), Ala422, and Arg439 each bind acetyl-CoA.

In the N-terminal section; belongs to the N-acetylglucosamine-1-phosphate uridyltransferase family. The protein in the C-terminal section; belongs to the transferase hexapeptide repeat family. Homotrimer. Requires Mg(2+) as cofactor.

Its subcellular location is the cytoplasm. It catalyses the reaction alpha-D-glucosamine 1-phosphate + acetyl-CoA = N-acetyl-alpha-D-glucosamine 1-phosphate + CoA + H(+). It carries out the reaction N-acetyl-alpha-D-glucosamine 1-phosphate + UTP + H(+) = UDP-N-acetyl-alpha-D-glucosamine + diphosphate. It functions in the pathway nucleotide-sugar biosynthesis; UDP-N-acetyl-alpha-D-glucosamine biosynthesis; N-acetyl-alpha-D-glucosamine 1-phosphate from alpha-D-glucosamine 6-phosphate (route II): step 2/2. The protein operates within nucleotide-sugar biosynthesis; UDP-N-acetyl-alpha-D-glucosamine biosynthesis; UDP-N-acetyl-alpha-D-glucosamine from N-acetyl-alpha-D-glucosamine 1-phosphate: step 1/1. It participates in bacterial outer membrane biogenesis; LPS lipid A biosynthesis. Its function is as follows. Catalyzes the last two sequential reactions in the de novo biosynthetic pathway for UDP-N-acetylglucosamine (UDP-GlcNAc). The C-terminal domain catalyzes the transfer of acetyl group from acetyl coenzyme A to glucosamine-1-phosphate (GlcN-1-P) to produce N-acetylglucosamine-1-phosphate (GlcNAc-1-P), which is converted into UDP-GlcNAc by the transfer of uridine 5-monophosphate (from uridine 5-triphosphate), a reaction catalyzed by the N-terminal domain. The chain is Bifunctional protein GlmU from Staphylococcus aureus (strain MRSA252).